A 656-amino-acid polypeptide reads, in one-letter code: CXXC-type zinc finger protein 1 (656 aa).

At Met1 the chain carries N-acetylmethionine. Residues 1 to 14 (MEGDGSDPEPPDAG) are compositionally biased toward acidic residues. The disordered stretch occupies residues 1-20 (MEGDGSDPEPPDAGEDSKSE). Phosphoserine occurs at positions 6 and 19. The PHD-type zinc finger occupies 28–76 (YCICRKPDINCFMIGCDNCNEWFHGDCIRITEKMAKAIREWYCRECREK). Positions 84 to 162 (YRHKKSRERD…QHHQQQQQQI (79 aa)) are disordered. The segment covering 90-120 (RERDGNERDSSEPRDEGGGRKRPVPDPDLQR) has biased composition (basic and acidic residues). The residue at position 124 (Ser124) is a Phosphoserine. The segment at 160-209 (QQIKRSARMCGECEACRRTEDCGHCDFCRDMKKFGGPNKIRQKCRLRQCQ) adopts a CXXC-type zinc-finger fold. Residues Cys169, Cys172, Cys175, Cys181, Cys184, Cys187, Cys203, and Cys208 each contribute to the Zn(2+) site. 2 disordered regions span residues 219 to 287 (FPSS…LPLD) and 311 to 373 (EESP…ASLP). Ser224 is subject to Phosphoserine. A Phosphothreonine modification is found at Thr227. Residues 239–249 (LPTQQQPQPSQ) show a composition bias toward low complexity. A Glycyl lysine isopeptide (Lys-Gly) (interchain with G-Cter in SUMO2) cross-link involves residue Lys250. The span at 321–334 (RKRAVKVKHVKRRE) shows a compositional bias: basic residues. Basic and acidic residues predominate over residues 335 to 345 (KKSEKKKEERY). A compositionally biased stretch (basic residues) spans 346–358 (KRHRQKQKHKDKW). Residues 359–368 (KHPERADAKD) are compositionally biased toward basic and acidic residues. Residues 422–474 (AEEHGKKLLERIRREQQSARTRLQEMERRFHELEAIILRAKQQAVREDEESNE) adopt a coiled-coil conformation.

As to quaternary structure, component of the SET1 complex, at least composed of the catalytic subunit (SETD1A or SETD1B), WDR5, WDR82, RBBP5, ASH2L/ASH2, CXXC1/CFP1 HCFC1 and DPY30. Interacts with SETD1A. Interacts with ZNF335. Interacts with PRDM9; this interaction does not link PRDM9-activated recombination hotspot sites with DSB machinery and is not required for the hotspot recognition pathway. Interacts with histone H3K4me3. In terms of processing, may be regulated by proteolysis. As to expression, ubiquitous.

It localises to the nucleus speckle. Its subcellular location is the nucleus. Its function is as follows. Transcriptional activator that exhibits a unique DNA binding specificity for CpG unmethylated motifs with a preference for CpGG. In Homo sapiens (Human), this protein is CXXC-type zinc finger protein 1 (CXXC1).